Consider the following 2291-residue polypeptide: MKGHQFKSWIFELREIVREIKNSHYFLDSWTQFNSVGSFIHIFFHQERFRKLLDPRIFSILLLRNSQGSTSNRYFTIKGVVLFVVAALLYRINNRNMVESKNLYLKGLLPIPMNSIGPRNDTSEESFGSSNINRLIVSLLYLTKGKKISESCFRDPKESTWVLPITQKCIMPESNWSSRWWRNWIGKKRDFCCKISNQTVAGIDISFKEKDIKYLEFLFVYYMDDPIRKGHDWELFDRLSPSKRRNIINLNSGQLFEILVKDWICYLMFAFREKIPIEVEGFFKQQGAGSTIQSNDIEHVSHLFSRNKWAISLQNCAQFHMWQFHQDLFVSWGKNPHESDFLRKISRENWIWLDNVWLVNKDRFFSKVRNVSSNIQYDSTRSSFVQVTDSSQLNGSSDQFIDPFDSISNEDSEYHYHTLINQREIQQLKERSILLDPSFIQTEGREIESDRFPKYLSGYSSMPRLFTEREKRMNNHLLPEESEEFLGNPTRAIRSFFSDRWSELHLGSNPTERSTRDQKLLKKEQDVSFVPSRRSENKEIVNIFKIITYLQNTVSIHSISSDLGCDMVPKDELDMDSSNKISFLNKNPFFDLFHLFHERKRGGYTLRHESEERFQEMADLFTLSITEPDLVYHKGFAFSIDSYGLDQRQFLKEVFNFRDESKKKSLLVLPPIFYEENESFYRRIRKNWVRISCGNYLEDPKRVVFASNNIMEAVNQYRLIRNMIQIQFQYSPYGYIRNVLNRFFLMKRPDRNFEYGIQRDLIGNDTLNHRTIMKDTINQHLSNLKKSQKKWFDPLIFLSQTERSINRDPNAYRYKWSNGSKNFQEHLEHFVSERKSRFQVVFDQLCINQYSIDWSEVIDKKDLSKSLRFFLSKLLRFFLSKLLLFLSKLLLFLSNSLPFFFVSFENIPIHRSEIHIYELKGPNDQLCNQLLESIGLQIVHLKKLKPFLLDDHNTSQKSKFLINGGTISPFLFNKIPKWMIDSFHTRKNRRKSFDNTDSYFSIVSHDQDNWLNPVKPFQRSSLISSFSKANRLRFLNNPHHFCFYCNKRFPFYVEKARLNNSDFTYGQFLTILFIHNKIFSSCGGKKKHAFLERDTISPSSIESQVSNIFISNDFPQSGDERYNLYKSFHFPIRSDPLVRRAIYSIADISGTPLIEGQRVNFERTYCQTLSDMNLSDSEEKSLHQYLNFNSNMGLIHTPCSEKYLQRKKRSLCLKKCVDKGQMDRTFQRDSAFSTLSKWNLIQTYMPWFFTSTGYKYLNLIFLDTFSDLLRILSSSQKFVSIFHDIMHGLDISWRILQKKLCLPQRNLISEISSKSLHNLLLSEEMIHRNNESSLISTHLRSPNVREVLYSILFLLLVAGYIVRTHLLFVSRAYSELQTEFEKIKSLMIPSYMIELRKLLDRYPTSELNSFWLKNLFLVALEQLGDCLEEIRGSGGNMLWGGDPAYGVKSIRSKKKDLKINFIDIIDLISIIPNPINRITFSRNTRHLSHTSKEIYSLIRKRKNVSGDWIDDKIESWVANSDSIDDKEREFLVQFSTLRAEKRIDQILLSLTHSDHLSKNDSGYQMIEQPGTIYLRYLVDIHKKYLMNYEFNTSCLAERRIFLAHYQTITYSQTSCGANSFHFPSHGKPFSLRLALSPSRSILVIGSIGTGRSYLVKYLATNSYVPFITVFLNKFLDNKPKGFFIDDIDIDDSDDIDASNDIDRELDTELELLTMMNALTMDMMSEIDRFYITLQFELAKAMSPCIIWIPNIHDLDVNESSYLALGLLVNSLSRDCERCSTRNILVIASTHIPQKVDPALIAPNKLNTCIKIRRLLIPQQRKHFFTLSYTRGFHLEKKMFHTNGFESITMGSSARDLVALTNEALSISITQKKSIIDTNTIRSALHRQTWDLRSQVRSVQDHGILFYQIGRAVAQNVLISNCPIDPISIYMKKKSCNEGDSYLYKWYFELGTSMKKFTILLYLLSCSAGSVAQDLWSLPVPDEKNRITSYGFIENDSDLVHGLLEVQGALVGSSRTEKDCSQFDNDRVTLLFRSEPRDPLYMMQDGSCSIVDQRFLYEKYESEFEEGEGEGVLDPQQIEEDLFNHIVWAPRIWRPRGFLFDCIERPNELGFPYLAGSFRGKRIIYDEKYELQENDSEFLQSGTMQYQRRDRSSKEQGFFRISQFIWDPADPLFFLFKDQPFVSVFSHREFFADEEMSKGLLTSQTDPPTSIYKRWFIKNTQEKHFELLIQRQRWLRTNSSLSNGFFRSNTRSESYQYLSNLFLSNGTLLDRMTKTLLKKRWLFSDEMKTGFM.

1645–1652 (GSIGTGRS) contacts ATP.

Belongs to the Ycf2 family.

Its subcellular location is the plastid. It is found in the chloroplast stroma. Probable ATPase of unknown function. Its presence in a non-photosynthetic plant (Epifagus virginiana) and experiments in tobacco indicate that it has an essential function which is probably not related to photosynthesis. In Olimarabidopsis pumila (Dwarf rocket), this protein is Protein Ycf2.